A 276-amino-acid polypeptide reads, in one-letter code: uncharacterized protein (276 aa).

A disordered region spans residues 1–70 (MSKAKSPIKS…SDDDEEDSPN (70 aa)). Positions 21-35 (VLREKKVKDAEKAEH) are enriched in basic and acidic residues. An RRM domain is found at 105–183 (GVLYVGRLPH…KLLQCKVIPE (79 aa)). The tract at residues 249–276 (VSHPKAASPVASKKSSKKKNKKVLAAHK) is disordered. Positions 252 to 261 (PKAASPVASK) are enriched in low complexity. Residues 262–276 (KSSKKKNKKVLAAHK) show a composition bias toward basic residues.

The protein localises to the nucleus. It localises to the nucleolus. This is an uncharacterized protein from Schizosaccharomyces pombe (strain 972 / ATCC 24843) (Fission yeast).